Consider the following 472-residue polypeptide: MLPCFTRKPVDHPLGFLVALSGLLMQLMSYGIDNSYSIFSDDMHKDPSLGYPSVTTISLGNSVSLGLSPAFGVLCGFLVDRVPPRLMMAVSTLMLFAGLWLSSTFAHNVTAVTFSYCLLASISSACMLSPGAAATSSWFNRYQGLAMGINFSGGGVGSAIIPSLAGKWVVAYGWRKTFRLMSAFCAIGVVATLLSARRAPPKKEEAGPSEYDEGQERQEQGEEEQAHTDEENRNNNNSNGETTPARRGLHTHKLNPWELFLTMFSRAFLGNFFCWLIFSWAFYSLIYVAVPYVSSMGKAGTVYADISPIPTDIASTLFTFYGVFQIVGSILVGWLATGTTNEFAYVLCATIGGIFCAFLGFCRSYVAFALLLCVIGFCMAGMFAVMPALIAERLYGPNLGFYMGAVFLAGVVGGFSAPPIQAELQQRHYGNYTYVCVFMSACMTLAAAVCYITMWRDKRVRIVSAAAEAKLA.

Residues 1–11 are Cytoplasmic-facing; sequence MLPCFTRKPVD. Residues 12–32 form a helical membrane-spanning segment; it reads HPLGFLVALSGLLMQLMSYGI. The Extracellular segment spans residues 33-58; the sequence is DNSYSIFSDDMHKDPSLGYPSVTTIS. A helical transmembrane segment spans residues 59-79; the sequence is LGNSVSLGLSPAFGVLCGFLV. Topologically, residues 80–85 are cytoplasmic; sequence DRVPPR. Residues 86 to 106 form a helical membrane-spanning segment; the sequence is LMMAVSTLMLFAGLWLSSTFA. The Extracellular portion of the chain corresponds to 107–108; it reads HN. A glycan (N-linked (GlcNAc...) asparagine) is linked at Asn-108. A helical membrane pass occupies residues 109–129; sequence VTAVTFSYCLLASISSACMLS. Residues 130–144 lie on the Cytoplasmic side of the membrane; that stretch reads PGAAATSSWFNRYQG. Residues 145–165 form a helical membrane-spanning segment; the sequence is LAMGINFSGGGVGSAIIPSLA. Topologically, residues 166–179 are extracellular; it reads GKWVVAYGWRKTFR. A helical membrane pass occupies residues 180-196; the sequence is LMSAFCAIGVVATLLSA. Residues 197–271 lie on the Cytoplasmic side of the membrane; that stretch reads RRAPPKKEEA…TMFSRAFLGN (75 aa). Residues 200 to 248 form a disordered region; the sequence is PPKKEEAGPSEYDEGQERQEQGEEEQAHTDEENRNNNNSNGETTPARRG. Over residues 214–233 the composition is skewed to basic and acidic residues; sequence GQERQEQGEEEQAHTDEENR. Residues 272–292 traverse the membrane as a helical segment; it reads FFCWLIFSWAFYSLIYVAVPY. The Extracellular portion of the chain corresponds to 293 to 315; the sequence is VSSMGKAGTVYADISPIPTDIAS. The helical transmembrane segment at 316-336 threads the bilayer; the sequence is TLFTFYGVFQIVGSILVGWLA. Residues 337–341 are Cytoplasmic-facing; it reads TGTTN. Residues 342-362 form a helical membrane-spanning segment; it reads EFAYVLCATIGGIFCAFLGFC. The Extracellular segment spans residues 363-365; that stretch reads RSY. Residues 366–386 form a helical membrane-spanning segment; sequence VAFALLLCVIGFCMAGMFAVM. Over 387–399 the chain is Cytoplasmic; the sequence is PALIAERLYGPNL. A helical membrane pass occupies residues 400–420; it reads GFYMGAVFLAGVVGGFSAPPI. Over 421–434 the chain is Extracellular; that stretch reads QAELQQRHYGNYTY. An N-linked (GlcNAc...) asparagine glycan is attached at Asn-431. Residues 435-455 traverse the membrane as a helical segment; that stretch reads VCVFMSACMTLAAAVCYITMW. Topologically, residues 456–472 are cytoplasmic; that stretch reads RDKRVRIVSAAAEAKLA.

It belongs to the major facilitator superfamily. RibJ family.

It localises to the cell membrane. In terms of biological role, transporter involved in riboflavin (vitamin B2) uptake. Also transports FMN and FAD. This Trypanosoma cruzi (strain CL Brener) protein is Riboflavin transporter RibJ.